The sequence spans 501 residues: Armadillo repeat-containing protein 6 (501 aa).

A Phosphoserine modification is found at Ser64. ARM repeat units follow at residues 220–264 (GVLP…HAHN), 274–318 (KGLK…DLGG), 319–369 (LSIL…RAGG), and 370–412 (TESI…VEGG). Position 263 is a pros-methylhistidine (His263).

This sequence belongs to the ARMC6 family. In terms of processing, methylated at His-263 by METTL9.

The polypeptide is Armadillo repeat-containing protein 6 (ARMC6) (Pongo abelii (Sumatran orangutan)).